The primary structure comprises 428 residues: MAKTSKFTQTLLASALAVVAGSASAAAFQLAEVSTSGLGRAYAGEAAIADNAAVVATNPALMSLLKQPEISVGAIYVDPNINLTSPMPGFAYKNIAPNALVPTVYGVYPINEKFAVGGGLNVNYGLATEFDDKYAGGFLGGKTDLTAINFNLSGAYRVTEKFSVGLGLNAVHAKAKLERYAGVALKLKVPNVAQLAALPANTVISKLQGDKWGFGWNAGLVYEFNERNRIGIAYHSQVDINFKGQYSNHFPLAAAALLQTKGITATGGKEIPGTLHLPLPAYWEISGYHKMTDRFAMHYSYKYTQWSKFKELRAKGTDGKTLFSKTEEFRDSSRIALGASYDVTDALTVRTGIAYDESAADEHNTISIPDTDRTWFSVGATYRFTPNVSIDAGFAHLKGKKNTFKEEGVPFTSKASANLYGLNVNYRF.

The signal sequence occupies residues 1–25 (MAKTSKFTQTLLASALAVVAGSASA).

It belongs to the OmpP1/FadL family.

It is found in the cell outer membrane. This is 47 kDa outer membrane protein from Pasteurella multocida (strain Pm70).